A 95-amino-acid polypeptide reads, in one-letter code: Co-chaperonin GroES (95 aa).

The protein belongs to the GroES chaperonin family. Heptamer of 7 subunits arranged in a ring. Interacts with the chaperonin GroEL.

It localises to the cytoplasm. Together with the chaperonin GroEL, plays an essential role in assisting protein folding. The GroEL-GroES system forms a nano-cage that allows encapsulation of the non-native substrate proteins and provides a physical environment optimized to promote and accelerate protein folding. GroES binds to the apical surface of the GroEL ring, thereby capping the opening of the GroEL channel. This chain is Co-chaperonin GroES, found in Pelodictyon phaeoclathratiforme (strain DSM 5477 / BU-1).